The following is a 57-amino-acid chain: Large ribosomal subunit protein bL32 (57 aa).

Over residues 1–19 (MAVPKRRMSRANTRSRRAQ) the composition is skewed to basic residues. The segment at 1 to 20 (MAVPKRRMSRANTRSRRAQW) is disordered.

This sequence belongs to the bacterial ribosomal protein bL32 family.

This Mycobacterium avium (strain 104) protein is Large ribosomal subunit protein bL32.